Consider the following 199-residue polypeptide: Charged multivesicular body protein 1b (199 aa).

Coiled-coil stretches lie at residues 10 to 30 (NLKFAAKELQRNSKKCDKEEK) and 178 to 199 (TSVASAEQDELSQRLAKLRDQV). The interval 167 to 199 (ELPQGQTGSVGTSVASAEQDELSQRLAKLRDQV) is disordered. Positions 170 to 182 (QGQTGSVGTSVAS) are enriched in polar residues. Positions 186 to 196 (DELSQRLAKLR) match the MIT-interacting motif motif.

It belongs to the SNF7 family. As to quaternary structure, probable peripherally associated component of the endosomal sorting required for transport complex III (ESCRT-III).

Its subcellular location is the cytoplasm. The protein localises to the cytosol. The protein resides in the endosome. It localises to the late endosome membrane. In terms of biological role, probable peripherally associated component of the endosomal sorting required for transport complex III (ESCRT-III) which is involved in multivesicular bodies (MVBs) formation and sorting of endosomal cargo proteins into MVBs. MVBs contain intraluminal vesicles (ILVs) that are generated by invagination and scission from the limiting membrane of the endosome and mostly are delivered to lysosomes enabling degradation of membrane proteins, such as stimulated growth factor receptors, lysosomal enzymes and lipids. This chain is Charged multivesicular body protein 1b (chmp1b), found in Danio rerio (Zebrafish).